Consider the following 559-residue polypeptide: Aminopeptidase Q (559 aa).

Over 1-13 (MSRPFSSGVYVSR) the chain is Cytoplasmic. A helical; Signal-anchor for type II membrane protein membrane pass occupies residues 14–34 (GVALLLAALTAVLLLVLVALA). At 35–559 (SLYGSCAHVQ…VPFRHFLAEH (525 aa)) the chain is on the lumenal side. Asn-121 and Asn-129 each carry an N-linked (GlcNAc...) asparagine glycan. Position 237 (Glu-237) interacts with substrate. 3 N-linked (GlcNAc...) asparagine glycosylation sites follow: Asn-258, Asn-285, and Asn-343. 376–380 (GAMEN) serves as a coordination point for substrate. Position 412 (His-412) interacts with Zn(2+). Catalysis depends on Glu-413, which acts as the Proton acceptor. Zn(2+) contacts are provided by His-416 and Glu-435.

The protein belongs to the peptidase M1 family. Homodimer. The cofactor is Zn(2+). Post-translationally, N-glycosylated.

It is found in the membrane. Inhibited by bestatin. In terms of biological role, metalloprotease which may be important for placentation by regulating biological activity of key peptides at the embryo-maternal interface. On synthetic substrates it shows a marked preference for Leu-4-methylcoumaryl-7-amide (Leu-MCA) over Met-MCA, Arg-LCA and Lys-LCA. Cleaves the N-terminal amino acid of several peptides such as angiotensin-3, kisspeptin-10 and endokinin C. The polypeptide is Aminopeptidase Q (Mus musculus (Mouse)).